The chain runs to 226 residues: Uridylate kinase (226 aa).

Residue 9 to 13 participates in ATP binding; sequence KVSGK. A UMP-binding site is contributed by Gly-46. 2 residues coordinate ATP: Gly-47 and Arg-51. UMP-binding positions include Asp-68 and 116–122; that span reads FQPGQST. ATP-binding residues include Thr-142, Tyr-148, and Asp-151.

It belongs to the UMP kinase family. Homohexamer.

Its subcellular location is the cytoplasm. It carries out the reaction UMP + ATP = UDP + ADP. It participates in pyrimidine metabolism; CTP biosynthesis via de novo pathway; UDP from UMP (UMPK route): step 1/1. With respect to regulation, inhibited by UTP. Functionally, catalyzes the reversible phosphorylation of UMP to UDP. This is Uridylate kinase from Hyperthermus butylicus (strain DSM 5456 / JCM 9403 / PLM1-5).